A 363-amino-acid chain; its full sequence is Phosphoserine aminotransferase (363 aa).

Arg42 provides a ligand contact to L-glutamate. Residues 76–77, Trp102, Thr156, Asp175, and Gln198 contribute to the pyridoxal 5'-phosphate site; that span reads GR. Lys199 carries the post-translational modification N6-(pyridoxal phosphate)lysine. A pyridoxal 5'-phosphate-binding site is contributed by 240 to 241; the sequence is NT.

This sequence belongs to the class-V pyridoxal-phosphate-dependent aminotransferase family. SerC subfamily. As to quaternary structure, homodimer. Pyridoxal 5'-phosphate is required as a cofactor.

It is found in the cytoplasm. It carries out the reaction O-phospho-L-serine + 2-oxoglutarate = 3-phosphooxypyruvate + L-glutamate. The enzyme catalyses 4-(phosphooxy)-L-threonine + 2-oxoglutarate = (R)-3-hydroxy-2-oxo-4-phosphooxybutanoate + L-glutamate. Its pathway is amino-acid biosynthesis; L-serine biosynthesis; L-serine from 3-phospho-D-glycerate: step 2/3. It participates in cofactor biosynthesis; pyridoxine 5'-phosphate biosynthesis; pyridoxine 5'-phosphate from D-erythrose 4-phosphate: step 3/5. Catalyzes the reversible conversion of 3-phosphohydroxypyruvate to phosphoserine and of 3-hydroxy-2-oxo-4-phosphonooxybutanoate to phosphohydroxythreonine. The sequence is that of Phosphoserine aminotransferase from Shewanella sp. (strain ANA-3).